A 94-amino-acid chain; its full sequence is Lipolysis-activating peptide 1-beta chain (94 aa).

An N-terminal signal peptide occupies residues 1–19 (MKILAVVLISVIVLNTANG). The 68-residue stretch at 20–87 (ENYYPQKYTN…FFNALESQCP (68 aa)) folds into the LCN-type CS-alpha/beta domain. 3 cysteine pairs are disulfide-bonded: Cys-34-Cys-56, Cys-42-Cys-66, and Cys-46-Cys-68.

The protein belongs to the long (3 C-C) scorpion toxin superfamily. As to quaternary structure, homodimer; disulfide-linked or monomer (edited version) or heterodimer of an alpha chain (AC D9U299 or AC D9U2A4) and this beta chain (non-edited version). As to expression, expressed by the venom gland.

Its subcellular location is the secreted. In terms of biological role, the homodimer inhibits HMG-CoA reductase (HMGCR) (32% of inhibition produced by 0.6 uM), a glycoprotein involved in the control of cholesterol biosynthesis. The inhibitory effects of bumarsin are seen at much lower concentrations (0.6 uM) than that for statins such as atorvastatin (5 mM) and simvastatin (10 uM). In addition to inhibition of HMG-CoA reductase, this protein lowers cholesterol levels by inducing steroid hormone synthesis via StAR, and by increasing reverse cholesterol transport mediated by the induction of ABCA1 and APOA1. Functionally, the heterodimer non-edited LVP1 induces lipolysis in rat adipocytes. Induction of lipolysis by LVP1 appears to be mediated through the beta-2 adrenergic receptor pathway (ADRB2). The monomer edited version, similar to alpha-toxins, may modulate voltage-gated sodium channels (Nav) and may block voltage-gated potassium channels (Kv). This is Lipolysis-activating peptide 1-beta chain from Lychas mucronatus (Chinese swimming scorpion).